The following is an 847-amino-acid chain: Pollen-specific leucine-rich repeat extensin-like protein 2 (847 aa).

A signal peptide spans 1–20 (MERPFGCFFILLLISYTVVA). LRR repeat units lie at residues 45–71 (INKVDPNLKFENDRLKRAYIALQAWKK), 106–130 (LTVVAGVDLNHADIAGHLPPELGLM), 131–153 (TDLALFHINSNRFCGIIPKSLSK), 155–178 (ALMYEFDVSNNRFVGQFPEVSLSW), 179–202 (PSLKFLDLRYNEFEGSLPSEIFDK), 204–224 (LDAIFLNNNRFESVIPGTIGK), 226–248 (KASVVTFANNKFSGCIPKSIGNM), and 249–273 (KNLNEIVFTGNNLTGCFPNEIGLLN). N-linked (GlcNAc...) asparagine glycans are attached at residues Asn260 and Asn274. 2 LRR repeats span residues 296 to 319 (LASVEQLDLSHNKLTGFVVDKFCK) and 321 to 343 (PNLDSFKFSYNFFNGEAESCVPG). Positions 381–847 (KDKCSGGSNG…SPPPPMFQGY (467 aa)) are disordered. The span at 438–484 (PKHESPKPEEPENKHELPKQKESPKPQPSKPEDSPKPEQPKPEESPK) shows a compositional bias: basic and acidic residues. Pro residues-rich tracts occupy residues 485-499 (PEQPQIPEPTKPVSP) and 533-642 (VPPP…PPPT). The contains the Ser-Pro(4) repeats stretch occupies residues 522–847 (SPPPPKVEDT…SPPPPMFQGY (326 aa)). 3 stretches are compositionally biased toward polar residues: residues 667–682 (QVPTPSSESDQSQILS), 688–720 (TPVQSSTPSSEPTQVPTPSSSESYQAPNLSPVQ), and 726–752 (QAPTTSSETSQVPTPSSESNQSPSQAP). Low complexity-rich tracts occupy residues 768–783 (PVQSPTPSSEPVSSPE) and 797–811 (NPSSVPSSSPSTDTS). Positions 838 to 847 (SPPPPMFQGY) are enriched in pro residues.

Post-translationally, hydroxylated on proline residues in the S-P-P-P-P repeat. In terms of processing, O-glycosylated on hydroxyprolines. Expressed in flowers, stamen, pollen, and pollinated carpels (at protein level).

It is found in the secreted. It localises to the cell wall. Its function is as follows. Modulates cell morphogenesis by regulating cell wall formation and assembly, and/or growth polarization. This Arabidopsis thaliana (Mouse-ear cress) protein is Pollen-specific leucine-rich repeat extensin-like protein 2 (PEX2).